Here is a 296-residue protein sequence, read N- to C-terminus: Solute carrier protein FPSE_08119 (296 aa).

Helical transmembrane passes span Gly12–Ala32, Ala122–Ile142, and Ala219–Val239. 3 Solcar repeats span residues Leu16–Glu102, Leu114–Gln205, and Ser213–Ser296.

It belongs to the mitochondrial carrier (TC 2.A.29) family.

The protein localises to the mitochondrion inner membrane. Its function is as follows. Solute carrier protein; part of the Fusarium detoxification of benzoxazolinone cluster involved in the degradation of benzoxazolinones produced by the host plant. Maize, wheat, and rye produce the 2 benzoxazinone phytoanticipins 2,4-dihy-droxy-7-methoxy-1,4-benzoxazin-3-one (DIMBOA) and 2,4-dihydroxy-1,4-benzoxazin-3-one (DIBOA) that, due to their inherent instability once released, spontaneously degrade to the more stable corresponding benzoxazolinones, 6-methoxy-2-benzoxazolinone (MBOA) and 2-benzoxazolinone (BOA), respectively. The sequence is that of Solute carrier protein FPSE_08119 from Fusarium pseudograminearum (strain CS3096) (Wheat and barley crown-rot fungus).